A 705-amino-acid polypeptide reads, in one-letter code: Dynein axonemal intermediate chain 1 (705 aa).

Disordered stretches follow at residues 1 to 44 (MPSK…AVRP) and 122 to 169 (AGSQ…DVPA). Phosphoserine occurs at positions 124 and 127. The span at 124–135 (SQESVKVVTSDT) shows a compositional bias: polar residues. Over residues 136–159 (EILEEEEEPKEGEGEGEGEAEGEA) the composition is skewed to acidic residues. 5 WD repeats span residues 386 to 426 (SSES…SQPC), 435 to 478 (KHTD…LVHI), 543 to 583 (AHNM…PMFI), 585 to 625 (DLNA…YEAI), and 633 to 672 (KKKN…RKMP).

It belongs to the dynein intermediate chain family. In terms of assembly, consists of at least two heavy chains and a number of intermediate and light chains. Interacts with BICD2. Interacts with CFAP45 and CFAP52. Interacts with CFAP53.

The protein localises to the cytoplasm. Its subcellular location is the cytoskeleton. The protein resides in the cilium axoneme. Part of the dynein complex of respiratory cilia. The polypeptide is Dynein axonemal intermediate chain 1 (Dnai1) (Rattus norvegicus (Rat)).